Consider the following 522-residue polypeptide: Probable protein kinase UbiB (522 aa).

A Protein kinase domain is found at 119-496 (SFDADPVASA…QRRTNRLLLT (378 aa)). ATP contacts are provided by residues 125–133 (VASASIAQV) and K147. Catalysis depends on D282, which acts as the Proton acceptor. A helical transmembrane segment spans residues 494 to 514 (LLTVFYLIGGFVAGGLFAHWI).

It belongs to the ABC1 family. UbiB subfamily.

The protein resides in the cell inner membrane. It functions in the pathway cofactor biosynthesis; ubiquinone biosynthesis [regulation]. Is probably a protein kinase regulator of UbiI activity which is involved in aerobic coenzyme Q (ubiquinone) biosynthesis. The chain is Probable protein kinase UbiB from Leptothrix cholodnii (strain ATCC 51168 / LMG 8142 / SP-6) (Leptothrix discophora (strain SP-6)).